Consider the following 644-residue polypeptide: MFQDNPLLAQLKQQLHSQTPRAEGVVKGTEKGFGFLEVDAQKSYFIPPPQMKKVMHGDRIVAVIHSEKERESAEPESLVEPFLTRFVGKVQKKDDRLAIVPDHPLLKDAIPCRAARGVEHDFKQGDWAVAEMRRHPLKGDRGFYAELTQFITFSDDHFVPWWVTLARHNLEKEAPDGVATEMLDEGLTRRDLTALDFVTIDSASTEDMDDALYAESTADGKLLLTVAIADPTAWIAEGSKLDNAAKVRAFTNYLPGFNIPMLPRELSDDLCSLRANEVRPVLACRMTLAADGTIEDNIEFFAATIESKAKLAYDDVSDWLEGRGSWQPDSEAIAQQITLLKDVCQRRSEWRQTHALVFKDRPDYRFVLGEKGEVLDIVAEPRRIANRIVEESMIAANICAARVLRDKLGFGVYNVHTGFDPANTEQLAALLKTHDVHVDPTEVLTLEGFCKLRRELDAQPTGFLDSRIRRFQSFAEISTEPGPHFGLGLEAYATWTSPIRKYGDMINHRLLKAIIKGETIARPQDEATVQMAERRRLNRMAERDVADWLYARFLNDKAGTDTRFAAEIIDVSRGGMRVRLVDNGAVAFIPAPFLHAVRDELVCSQENGTVQIKGEVVYKVTDVIDVTIAEVRMETRSIIARPAV.

The RNB domain maps to 189–516 (RRDLTALDFV…NHRLLKAIIK (328 aa)). Positions 561–643 (DTRFAAEIID…ETRSIIARPA (83 aa)) constitute an S1 motif domain.

The protein belongs to the RNR ribonuclease family. RNase II subfamily.

It localises to the cytoplasm. It carries out the reaction Exonucleolytic cleavage in the 3'- to 5'-direction to yield nucleoside 5'-phosphates.. Its function is as follows. Involved in mRNA degradation. Hydrolyzes single-stranded polyribonucleotides processively in the 3' to 5' direction. In Klebsiella pneumoniae subsp. pneumoniae (strain ATCC 700721 / MGH 78578), this protein is Exoribonuclease 2.